The following is an 832-amino-acid chain: Prickle-like protein 1-B (832 aa).

The PET domain maps to 14–122 (FGCQRSSTSD…NIKMLSRAVM (109 aa)). 3 consecutive LIM zinc-binding domains span residues 124–188 (AMCE…ELLK), 189–249 (PRCS…HYAE), and 250–313 (YCES…EDVH). Disordered stretches follow at residues 312-346 (VHASDSSDSAFQSARSRESRRSVRMGKSSRSADQC), 428-455 (QQPSEDNRSTEHWMSENIKGKNDLQRNN), 602-701 (ICQE…KERN), and 766-832 (CSSS…CIIS). Composition is skewed to basic and acidic residues over residues 432-453 (EDNRSTEHWMSENIKGKNDLQR) and 603-614 (CQEKPPPEEKPM). Composition is skewed to basic residues over residues 669–680 (RPHHHRRRKSRK) and 816–832 (TKSKKKKGHKGKNCIIS). Cysteine methyl ester is present on cysteine 829. Cysteine 829 carries the S-farnesyl cysteine lipid modification. The propeptide at 830–832 (IIS) is removed in mature form.

Belongs to the prickle / espinas / testin family. As to quaternary structure, interacts with dvl2/dsh and mapk8/jnk1. Expressed in the dorsal marginal zone of early gastrulae (stage 10). As gastrulation proceeds, expression expands to include the lateral and ventral marginal zones, excluding the few rows of cells above the blastopore lip. Expression moves dorsally with gastrulation cell movements, and by the end of gastrulation expression is seen in dorsal mesoderm and posterior but not anterior neural ectoderm. Expression becomes down-regulated in mesoderm but remains strong in posterior ectoderm through the neurula stages. During tailbud stages, expressed in the pronephric duct, tailbud, tailtip and forming somites. In the most posterior regions, expressed in notochord and in the floorplate of the neural tube with weak expression in the roofplate. At stage 30, expressed in a complex pattern in the head including strong expression in the lens and otic vesicle.

The protein localises to the cell membrane. Its function is as follows. Acts in a planar cell polarity (PCP) complex; polarization along the apical/basal axis of epithelial cells. Regulates the polarized assembly of fibronectrin on the surface of the mesoderm during gastrulation. Essential for gastrulation cell movements, cooperating with dvl2/dsh to activate jnk. Acts together with tes to control axial elongation. This chain is Prickle-like protein 1-B (prickle1-b), found in Xenopus laevis (African clawed frog).